Here is a 204-residue protein sequence, read N- to C-terminus: Urease accessory protein UreG (204 aa).

Residue 15 to 22 participates in GTP binding; that stretch reads GPVGSGKT.

Belongs to the SIMIBI class G3E GTPase family. UreG subfamily. Homodimer. UreD, UreF and UreG form a complex that acts as a GTP-hydrolysis-dependent molecular chaperone, activating the urease apoprotein by helping to assemble the nickel containing metallocenter of UreC. The UreE protein probably delivers the nickel.

Its subcellular location is the cytoplasm. Facilitates the functional incorporation of the urease nickel metallocenter. This process requires GTP hydrolysis, probably effectuated by UreG. The chain is Urease accessory protein UreG from Methylobacterium sp. (strain 4-46).